The chain runs to 158 residues: UPF0735 ACT domain-containing protein Bsph_3944 (158 aa).

An ACT domain is found at 80–155 (TVFLQLQDRK…FVESAEVISS (76 aa)).

It belongs to the UPF0735 family.

In Lysinibacillus sphaericus (strain C3-41), this protein is UPF0735 ACT domain-containing protein Bsph_3944.